The sequence spans 368 residues: Homoserine O-acetyltransferase (368 aa).

Residues 47-349 (NAILICHALS…SGEGHDSFLL (303 aa)) form the AB hydrolase-1 domain. Serine 153 serves as the catalytic Nucleophile. Arginine 221 lines the substrate pocket. Residues aspartate 311 and histidine 344 contribute to the active site. Aspartate 345 contributes to the substrate binding site.

The protein belongs to the AB hydrolase superfamily. MetX family. As to quaternary structure, homodimer.

It localises to the cytoplasm. The catalysed reaction is L-homoserine + acetyl-CoA = O-acetyl-L-homoserine + CoA. Its pathway is amino-acid biosynthesis; L-methionine biosynthesis via de novo pathway; O-acetyl-L-homoserine from L-homoserine: step 1/1. Transfers an acetyl group from acetyl-CoA to L-homoserine, forming acetyl-L-homoserine. The chain is Homoserine O-acetyltransferase from Leptospira borgpetersenii serovar Hardjo-bovis (strain JB197).